The sequence spans 233 residues: 5'-methylthioadenosine/S-adenosylhomocysteine nucleosidase (233 aa).

Residue glutamate 12 is the Proton acceptor of the active site. Substrate contacts are provided by residues glycine 78, isoleucine 152, and 173 to 174 (ME). The active-site Proton donor is aspartate 197.

It belongs to the PNP/UDP phosphorylase family. MtnN subfamily. Homodimer.

It carries out the reaction S-adenosyl-L-homocysteine + H2O = S-(5-deoxy-D-ribos-5-yl)-L-homocysteine + adenine. The catalysed reaction is S-methyl-5'-thioadenosine + H2O = 5-(methylsulfanyl)-D-ribose + adenine. It catalyses the reaction 5'-deoxyadenosine + H2O = 5-deoxy-D-ribose + adenine. The protein operates within amino-acid biosynthesis; L-methionine biosynthesis via salvage pathway; S-methyl-5-thio-alpha-D-ribose 1-phosphate from S-methyl-5'-thioadenosine (hydrolase route): step 1/2. Its function is as follows. Catalyzes the irreversible cleavage of the glycosidic bond in both 5'-methylthioadenosine (MTA) and S-adenosylhomocysteine (SAH/AdoHcy) to adenine and the corresponding thioribose, 5'-methylthioribose and S-ribosylhomocysteine, respectively. Also cleaves 5'-deoxyadenosine, a toxic by-product of radical S-adenosylmethionine (SAM) enzymes, into 5-deoxyribose and adenine. Thus, is required for in vivo function of the radical SAM enzymes biotin synthase and lipoic acid synthase, that are inhibited by 5'-deoxyadenosine accumulation. The polypeptide is 5'-methylthioadenosine/S-adenosylhomocysteine nucleosidase (Yersinia pseudotuberculosis serotype O:1b (strain IP 31758)).